The following is a 1025-amino-acid chain: Synapsin (1025 aa).

Disordered regions lie at residues M1–S94, V439–S784, Y872–D910, and D995–K1025. Residues T34–G52 show a composition bias toward pro residues. Low complexity predominate over residues S454 to E463. The segment covering P472–P492 has biased composition (pro residues). 2 stretches are compositionally biased toward low complexity: residues V499–S546 and S594–F626. A Phosphoserine modification is found at S539. Residues T651–T673 are compositionally biased toward polar residues. A compositionally biased stretch (basic and acidic residues) spans Q690 to S702. Positions K703–S725 are enriched in low complexity. Residues R726–Q735 show a composition bias toward polar residues. The segment covering S736–T749 has biased composition (pro residues). Polar residues predominate over residues N750–N759. Over residues S760–L772 the composition is skewed to low complexity. Over residues Y872–N904 the composition is skewed to polar residues. The span at D995–S1007 shows a compositional bias: low complexity.

This sequence belongs to the synapsin family. Identified in a complex with Syt1 and nwk. Widely expressed in the embryonic and adult nervous system synaptic terminals.

The protein localises to the synapse. Plays a significant role in nervous system function, which is subtle at the cellular level but manifests itself in complex behavior. In Drosophila melanogaster (Fruit fly), this protein is Synapsin (Syn).